Consider the following 1396-residue polypeptide: Helicase ARIP4 (1396 aa).

Residues 1–103 form a disordered region; sequence MSDASISGSE…LQKPANLRRN (103 aa). Residues 11 to 49 are compositionally biased toward acidic residues; the sequence is PELDPEDMEEEEEDDEDDDEEEEEEEDEEDNDGDDEDDK. Positions 75 to 84 are enriched in polar residues; it reads RSTTSGQSGQ. Residues 290–510 enclose the Helicase ATP-binding domain; it reads RFSGSSGFGC…WCMVDFVRPD (221 aa). 303 to 310 lines the ATP pocket; sequence HSMGLGKT. Positions 461–464 match the DEAH box motif; sequence DEGH. The short motif at 549-553 is the LXXLL motif 1 element; sequence LHSLL. The Helicase C-terminal domain maps to 717–891; it reads KMVLLFHLIE…RVVDDLNPEV (175 aa). Disordered stretches follow at residues 1117–1168 and 1194–1250; these read SGKQ…PDSP and NLGL…STMN. Composition is skewed to polar residues over residues 1128–1148 and 1218–1238; these read QATSGAQGSSAPYLSNGRHST and DQSSHWPSNKRNPYSQLSYPN. The LXXLL motif 2 motif lies at 1273–1277; sequence LPSLL. The interval 1340–1396 is disordered; sequence GLPTNNPASTFPGYLSSHSNYQASPGTSSRPLPSGETELGSCEEDGRDDDVVEVTGE. Positions 1355–1370 are enriched in polar residues; it reads SSHSNYQASPGTSSRP. Residues 1380–1396 are compositionally biased toward acidic residues; the sequence is SCEEDGRDDDVVEVTGE.

This sequence belongs to the SNF2/RAD54 helicase family.

The protein resides in the nucleus. It catalyses the reaction ATP + H2O = ADP + phosphate + H(+). DNA helicase that modulates androgen receptor (AR)-dependent transactivation in a promoter-dependent manner. The protein is Helicase ARIP4 (rad54l2) of Xenopus tropicalis (Western clawed frog).